Consider the following 90-residue polypeptide: Mitochondrial import inner membrane translocase subunit Tim10 (90 aa).

The Twin CX3C motif signature appears at Cys29–Cys54. Intrachain disulfides connect Cys29–Cys54 and Cys33–Cys50.

This sequence belongs to the small Tim family. In terms of assembly, heterohexamer; composed of 3 copies of TIMM9 and 3 copies of TIMM10/TIM10A, named soluble 70 kDa complex. The complex forms a 6-bladed alpha-propeller structure and associates with the TIMM22 component of the TIM22 complex. Interacts with multi-pass transmembrane proteins in transit. Also forms a complex composed of TIMM9, TIMM10/TIM10A and FXC1/TIM10B.

The protein localises to the mitochondrion inner membrane. Its function is as follows. Mitochondrial intermembrane chaperone that participates in the import and insertion of multi-pass transmembrane proteins into the mitochondrial inner membrane. May also be required for the transfer of beta-barrel precursors from the TOM complex to the sorting and assembly machinery (SAM complex) of the outer membrane. Acts as a chaperone-like protein that protects the hydrophobic precursors from aggregation and guide them through the mitochondrial intermembrane space. The polypeptide is Mitochondrial import inner membrane translocase subunit Tim10 (TIMM10) (Bos taurus (Bovine)).